A 415-amino-acid chain; its full sequence is tRNA(Met) cytidine acetate ligase (415 aa).

Residues 7–20, Gly-101, Asn-162, and 187–188 contribute to the ATP site; these read VVEY…HRYH and RI.

It belongs to the TmcAL family.

It is found in the cytoplasm. It catalyses the reaction cytidine(34) in elongator tRNA(Met) + acetate + ATP = N(4)-acetylcytidine(34) in elongator tRNA(Met) + AMP + diphosphate. Functionally, catalyzes the formation of N(4)-acetylcytidine (ac(4)C) at the wobble position of elongator tRNA(Met), using acetate and ATP as substrates. First activates an acetate ion to form acetyladenylate (Ac-AMP) and then transfers the acetyl group to tRNA to form ac(4)C34. This Bacillus velezensis (strain DSM 23117 / BGSC 10A6 / LMG 26770 / FZB42) (Bacillus amyloliquefaciens subsp. plantarum) protein is tRNA(Met) cytidine acetate ligase.